Reading from the N-terminus, the 261-residue chain is Transcription repressor OFP15 (261 aa).

The tract at residues 1-28 (MKLPFLNKNHSTSSYSSNSSSSSWPWPS) is disordered. Positions 11-28 (STSSYSSNSSSSSWPWPS) are enriched in low complexity. In terms of domain architecture, OVATE spans 112–172 (FSLESDDPYS…FAAFVDLLMN (61 aa)).

In terms of assembly, interacts with BLH1 and BLH3. In terms of tissue distribution, expressed in roots, cauline leaves, shoots, flower buds and siliques.

The protein resides in the nucleus. In terms of biological role, transcriptional repressor that regulates multiple aspects of plant growth and development through the regulation of BEL1-LIKE (BLH) and KNOX TALE (KNAT) homeodomain transcription factors. The protein is Transcription repressor OFP15 (OFP15) of Arabidopsis thaliana (Mouse-ear cress).